We begin with the raw amino-acid sequence, 148 residues long: Histone H2A-like 3 (148 aa).

Residues 101–128 (DDTHSQVEEMPQSEEEEEEEEEKEEEMV) are disordered. A compositionally biased stretch (acidic residues) spans 111 to 127 (PQSEEEEEEEEEKEEEM).

Belongs to the histone H2A family. As to quaternary structure, the nucleosome is a histone octamer containing two molecules each of H2A, H2B, H3 and H4 assembled in one H3-H4 heterotetramer and two H2A-H2B heterodimers. The octamer wraps approximately 147 bp of DNA.

It is found in the nucleus. It localises to the chromosome. Core component of nucleosome. Nucleosomes wrap and compact DNA into chromatin, limiting DNA accessibility to the cellular machineries which require DNA as a template. Histones thereby play a central role in transcription regulation, DNA repair, DNA replication and chromosomal stability. DNA accessibility is regulated via a complex set of post-translational modifications of histones, also called histone code, and nucleosome remodeling. The chain is Histone H2A-like 3 from Homo sapiens (Human).